Reading from the N-terminus, the 391-residue chain is Formate-dependent phosphoribosylglycinamide formyltransferase (391 aa).

Residues 18–19 (EL) and Glu-78 contribute to the N(1)-(5-phospho-beta-D-ribosyl)glycinamide site. Residues Arg-110, Lys-151, 156–161 (SSGKGQ), 191–194 (EEFI), and Glu-199 contribute to the ATP site. An ATP-grasp domain is found at 115–305 (ELAAQQLGVR…EFELHLRAIL (191 aa)). Residues Glu-264 and Glu-276 each coordinate Mg(2+). N(1)-(5-phospho-beta-D-ribosyl)glycinamide-binding positions include Asp-283, Lys-353, and 360 to 361 (RR).

Belongs to the PurK/PurT family. As to quaternary structure, homodimer.

It carries out the reaction N(1)-(5-phospho-beta-D-ribosyl)glycinamide + formate + ATP = N(2)-formyl-N(1)-(5-phospho-beta-D-ribosyl)glycinamide + ADP + phosphate + H(+). Its pathway is purine metabolism; IMP biosynthesis via de novo pathway; N(2)-formyl-N(1)-(5-phospho-D-ribosyl)glycinamide from N(1)-(5-phospho-D-ribosyl)glycinamide (formate route): step 1/1. Functionally, involved in the de novo purine biosynthesis. Catalyzes the transfer of formate to 5-phospho-ribosyl-glycinamide (GAR), producing 5-phospho-ribosyl-N-formylglycinamide (FGAR). Formate is provided by PurU via hydrolysis of 10-formyl-tetrahydrofolate. The polypeptide is Formate-dependent phosphoribosylglycinamide formyltransferase (Synechocystis sp. (strain ATCC 27184 / PCC 6803 / Kazusa)).